The primary structure comprises 187 residues: Segregation and condensation protein B (187 aa).

This sequence belongs to the ScpB family. Homodimer. Homodimerization may be required to stabilize the binding of ScpA to the Smc head domains. Component of a cohesin-like complex composed of ScpA, ScpB and the Smc homodimer, in which ScpA and ScpB bind to the head domain of Smc. The presence of the three proteins is required for the association of the complex with DNA.

The protein resides in the cytoplasm. Participates in chromosomal partition during cell division. May act via the formation of a condensin-like complex containing Smc and ScpA that pull DNA away from mid-cell into both cell halves. The chain is Segregation and condensation protein B from Agathobacter rectalis (strain ATCC 33656 / DSM 3377 / JCM 17463 / KCTC 5835 / VPI 0990) (Eubacterium rectale).